A 1879-amino-acid chain; its full sequence is Genome polyprotein (1879 aa).

Residues 37–98 (GPLDHDSRHG…TSTDVVRSGP (62 aa)) are disordered. Positions 38-50 (PLDHDSRHGRDPV) are enriched in basic and acidic residues. Residues 79 to 93 (SGTNPSHLKPTSTDV) show a composition bias toward polar residues. In terms of domain architecture, SF3 helicase spans 564 to 720 (DNVISCCTRR…ENWKRENPGK (157 aa)). ATP is bound at residue 590–597 (GPPGCGKT). Position 1093 is an O-(5'-phospho-RNA)-tyrosine (Tyr1093). The Peptidase C24 domain occupies 1188–1341 (GVTHKNAIVS…KLIVPYVKVD (154 aa)). Active-site for 3CLpro activity residues include His1222, Glu1243, and Cys1305. One can recognise a RdRp catalytic domain in the interval 1591-1716 (HDRYCVDYSK…IVPPLISSVM (126 aa)).

In terms of assembly, homodimer. Interacts with NTPase, protein p30 and protease-polymerase p76. As to quaternary structure, interacts with capsid protein VP1 and protease-polymerase p76. Interacts with host IEF4e; this interaction plays a role in translation of viral proteins. Homooligomer. Interacts with Vpg, protein p32 and may interact with capsid protein VP1. Specific enzymatic cleavages in vivo yield mature proteins. Pro-Pol is first autocatalytically cleaved, then processes the whole polyprotein. Post-translationally, VPg is uridylylated by the polymerase and is covalently attached to the 5'-end of the polyadenylated genomic and subgenomic RNAs. This uridylylated form acts as a nucleotide-peptide primer for the polymerase.

It is found in the host endoplasmic reticulum membrane. The enzyme catalyses a ribonucleoside 5'-triphosphate + H2O = a ribonucleoside 5'-diphosphate + phosphate + H(+). It carries out the reaction RNA(n) + a ribonucleoside 5'-triphosphate = RNA(n+1) + diphosphate. The catalysed reaction is Endopeptidase with a preference for cleavage when the P1 position is occupied by Glu-|-Xaa and the P1' position is occupied by Gly-|-Yaa.. Functionally, together with NTPase and NS4, initiates the formation of the replication complex. Induces the proliferation of the host smooth ER membranes forming long tubular structures. These remodeled membranes probably form the viral factories that contain the replication complex. In terms of biological role, displays NTPase activity, but no helicase activity. Induces the formation of convoluted membranes derived from the host ER. These remodeled membranes probably form the viral factories that contain the replication complex. Together with NS2 and NS4, initiates the formation of the replication complex. Probable key protein responsible for the formation of membrane alterations by the virus. Induces the formation of convoluted membranes derived from the host ER. These remodeled membranes probably form the viral factories that contain the replication complex. Together with NS2 and NTPase, initiates the formation of the replication complex. Its function is as follows. Viral genome-linked protein is covalently linked to the 5'-end of the positive-strand, negative-strand genomic RNAs and subgenomic RNA. Acts as a genome-linked replication primer. May recruit ribosome to viral RNA thereby promoting viral proteins translation. Interacts with host translation initiation complex to allow the translation of viral proteins. Functionally, protease-polymerase p76 processes the polyprotein: Pro-Pol is first released by autocleavage, then all other proteins are cleaved. Cleaves host translation initiation factor eIF4G1, eIF4G2 and PABP1 thereby inducing a shutdown of host protein synthesis. This shutdown may not prevent viral mRNA from being translated since viral Vpg replaces the cap. Also functions as an RNA-directed RNA polymerase, which replicates genomic and antigenomic viral RNA by recognizing specific signals. Also transcribes a subgenomic mRNA by initiating RNA synthesis internally on antigenomic RNA. This sgRNA codes for structural proteins. Catalyzes the covalent attachment VPg with viral RNAs. The protein is Genome polyprotein of Otariidae (fur seals &amp; sea lions).